Here is a 508-residue protein sequence, read N- to C-terminus: T-complex protein 1 subunit beta (508 aa).

Belongs to the TCP-1 chaperonin family. As to quaternary structure, component of the T-complex protein 1 (TCP1) complex.

It is found in the cytoplasm. Its function is as follows. Molecular chaperone; assists the folding of proteins upon ATP hydrolysis. The protein is T-complex protein 1 subunit beta (CCT2) of Encephalitozoon cuniculi (strain GB-M1) (Microsporidian parasite).